A 160-amino-acid polypeptide reads, in one-letter code: Nucleotide-binding protein VSAL_I1728 (160 aa).

The protein belongs to the YajQ family.

Functionally, nucleotide-binding protein. The sequence is that of Nucleotide-binding protein VSAL_I1728 from Aliivibrio salmonicida (strain LFI1238) (Vibrio salmonicida (strain LFI1238)).